The chain runs to 319 residues: tRNA(Ile)-lysidine synthase (319 aa).

Residue 32 to 37 (SGGSDS) coordinates ATP.

The protein belongs to the tRNA(Ile)-lysidine synthase family.

It localises to the cytoplasm. The enzyme catalyses cytidine(34) in tRNA(Ile2) + L-lysine + ATP = lysidine(34) in tRNA(Ile2) + AMP + diphosphate + H(+). Functionally, ligates lysine onto the cytidine present at position 34 of the AUA codon-specific tRNA(Ile) that contains the anticodon CAU, in an ATP-dependent manner. Cytidine is converted to lysidine, thus changing the amino acid specificity of the tRNA from methionine to isoleucine. The polypeptide is tRNA(Ile)-lysidine synthase (Chlamydia pneumoniae (Chlamydophila pneumoniae)).